The sequence spans 98 residues: Small ribosomal subunit protein uS19 (98 aa).

Positions 77 to 98 (TRTYRGHAGGKAEKGGAAPKRK) are disordered.

Belongs to the universal ribosomal protein uS19 family.

In terms of biological role, protein S19 forms a complex with S13 that binds strongly to the 16S ribosomal RNA. The polypeptide is Small ribosomal subunit protein uS19 (Chlorobium phaeovibrioides (strain DSM 265 / 1930) (Prosthecochloris vibrioformis (strain DSM 265))).